The primary structure comprises 283 residues: NAD kinase (283 aa).

Aspartate 66 functions as the Proton acceptor in the catalytic mechanism. NAD(+)-binding positions include 66–67 (DG), 137–138 (ND), arginine 165, aspartate 167, and 178–183 (TGYSLS).

This sequence belongs to the NAD kinase family. A divalent metal cation is required as a cofactor.

The protein resides in the cytoplasm. The catalysed reaction is NAD(+) + ATP = ADP + NADP(+) + H(+). Functionally, involved in the regulation of the intracellular balance of NAD and NADP, and is a key enzyme in the biosynthesis of NADP. Catalyzes specifically the phosphorylation on 2'-hydroxyl of the adenosine moiety of NAD to yield NADP. In Chloroherpeton thalassium (strain ATCC 35110 / GB-78), this protein is NAD kinase.